Consider the following 586-residue polypeptide: Acetylcholinesterase (586 aa).

A signal peptide spans 1 to 21 (MNLLVTSSLGVLLHLVVLCQA). N-linked (GlcNAc...) asparagine glycosylation is present at asparagine 80. Cysteine 88 and cysteine 115 are disulfide-bonded. The active-site Acyl-ester intermediate is serine 221. Cysteine 275 and cysteine 286 are joined by a disulfide. The Charge relay system role is filled by glutamate 348. Cysteines 423 and 542 form a disulfide. Asparagine 437 is a glycosylation site (N-linked (GlcNAc...) asparagine). Histidine 461 serves as the catalytic Charge relay system. Asparagine 478 and asparagine 554 each carry an N-linked (GlcNAc...) asparagine glycan. Residue serine 564 is the site of GPI-anchor amidated serine attachment. Residues 565 to 586 (SGTSSSKGIIFYVLFSILYLIF) constitute a propeptide, removed in mature form.

It belongs to the type-B carboxylesterase/lipase family. Isoform H form is a homodimer; the asymmetric form is a disulfide-bonded oligomer composed of a collagenic subunit (Q) and a variable number of T catalytic subunits. Post-translationally, an interchain disulfide bond is present in what becomes position 593 of the T isoform. Found in the synapses and to a lower extent in extrajunctional areas of muscle and nerve, and on erythrocyte membranes.

It localises to the cell membrane. It is found in the synapse. The enzyme catalyses acetylcholine + H2O = choline + acetate + H(+). With respect to regulation, inhibited by substrate concentrations above 0.5 mM. Functionally, terminates signal transduction at the neuromuscular junction by rapid hydrolysis of the acetylcholine released into the synaptic cleft. May be involved in cell-cell interactions. The protein is Acetylcholinesterase (ache) of Tetronarce californica (Pacific electric ray).